Reading from the N-terminus, the 241-residue chain is DNA repair protein RecO (241 aa).

The protein belongs to the RecO family.

Functionally, involved in DNA repair and RecF pathway recombination. The polypeptide is DNA repair protein RecO (Roseobacter denitrificans (strain ATCC 33942 / OCh 114) (Erythrobacter sp. (strain OCh 114))).